The sequence spans 243 residues: 3-deoxy-manno-octulosonate cytidylyltransferase (243 aa).

This sequence belongs to the KdsB family.

Its subcellular location is the cytoplasm. The enzyme catalyses 3-deoxy-alpha-D-manno-oct-2-ulosonate + CTP = CMP-3-deoxy-beta-D-manno-octulosonate + diphosphate. It functions in the pathway nucleotide-sugar biosynthesis; CMP-3-deoxy-D-manno-octulosonate biosynthesis; CMP-3-deoxy-D-manno-octulosonate from 3-deoxy-D-manno-octulosonate and CTP: step 1/1. The protein operates within bacterial outer membrane biogenesis; lipopolysaccharide biosynthesis. Its function is as follows. Activates KDO (a required 8-carbon sugar) for incorporation into bacterial lipopolysaccharide in Gram-negative bacteria. In Helicobacter pylori (strain P12), this protein is 3-deoxy-manno-octulosonate cytidylyltransferase.